A 553-amino-acid polypeptide reads, in one-letter code: 2-succinyl-5-enolpyruvyl-6-hydroxy-3-cyclohexene-1-carboxylate synthase (553 aa).

This sequence belongs to the TPP enzyme family. MenD subfamily. Homodimer. Requires Mg(2+) as cofactor. It depends on Mn(2+) as a cofactor. Thiamine diphosphate is required as a cofactor.

It catalyses the reaction isochorismate + 2-oxoglutarate + H(+) = 5-enolpyruvoyl-6-hydroxy-2-succinyl-cyclohex-3-ene-1-carboxylate + CO2. It participates in quinol/quinone metabolism; 1,4-dihydroxy-2-naphthoate biosynthesis; 1,4-dihydroxy-2-naphthoate from chorismate: step 2/7. It functions in the pathway quinol/quinone metabolism; menaquinone biosynthesis. Its function is as follows. Catalyzes the thiamine diphosphate-dependent decarboxylation of 2-oxoglutarate and the subsequent addition of the resulting succinic semialdehyde-thiamine pyrophosphate anion to isochorismate to yield 2-succinyl-5-enolpyruvyl-6-hydroxy-3-cyclohexene-1-carboxylate (SEPHCHC). This chain is 2-succinyl-5-enolpyruvyl-6-hydroxy-3-cyclohexene-1-carboxylate synthase, found in Thermobifida fusca (strain YX).